Reading from the N-terminus, the 120-residue chain is MISKIDKNKVRLKRHARVRTKLSGTAEKPRLNVYRSNKHIYAQIIDDVKGVTLAQASSQDKDIANTSASKVDLATTVGQEIAKKANDKGIKEIVFDRGGYLYHGRVKALADAARENGLEF.

This sequence belongs to the universal ribosomal protein uL18 family. Part of the 50S ribosomal subunit; part of the 5S rRNA/L5/L18/L25 subcomplex. Contacts the 5S and 23S rRNAs.

In terms of biological role, this is one of the proteins that bind and probably mediate the attachment of the 5S RNA into the large ribosomal subunit, where it forms part of the central protuberance. The polypeptide is Large ribosomal subunit protein uL18 (Staphylococcus epidermidis (strain ATCC 35984 / DSM 28319 / BCRC 17069 / CCUG 31568 / BM 3577 / RP62A)).